Here is a 270-residue protein sequence, read N- to C-terminus: 4-hydroxy-tetrahydrodipicolinate reductase (270 aa).

Residues 11 to 16 (GASGRM) and Glu37 contribute to the NAD(+) site. Arg38 is an NADP(+) binding site. Residues 101–103 (GTT) and 125–128 (APNM) contribute to the NAD(+) site. His158 (proton donor/acceptor) is an active-site residue. His159 provides a ligand contact to (S)-2,3,4,5-tetrahydrodipicolinate. Lys162 (proton donor) is an active-site residue. Residue 168–169 (GT) participates in (S)-2,3,4,5-tetrahydrodipicolinate binding.

Belongs to the DapB family.

Its subcellular location is the cytoplasm. The enzyme catalyses (S)-2,3,4,5-tetrahydrodipicolinate + NAD(+) + H2O = (2S,4S)-4-hydroxy-2,3,4,5-tetrahydrodipicolinate + NADH + H(+). The catalysed reaction is (S)-2,3,4,5-tetrahydrodipicolinate + NADP(+) + H2O = (2S,4S)-4-hydroxy-2,3,4,5-tetrahydrodipicolinate + NADPH + H(+). Its pathway is amino-acid biosynthesis; L-lysine biosynthesis via DAP pathway; (S)-tetrahydrodipicolinate from L-aspartate: step 4/4. Catalyzes the conversion of 4-hydroxy-tetrahydrodipicolinate (HTPA) to tetrahydrodipicolinate. In Shewanella amazonensis (strain ATCC BAA-1098 / SB2B), this protein is 4-hydroxy-tetrahydrodipicolinate reductase.